We begin with the raw amino-acid sequence, 1068 residues long: MEMNMFILPDFLQIQIESFRRFLHNCIFEELSKFPIIYDSNQGIEFKLIPEKYLLTEPLFTEREAVYKFTTYSSDLYVPIQLTLTKEKKSRIQTVCLGSLPLMTPQGTFVINGVSWTIVNQILRNPGIYYVLNRNGMYTATILCLDVDKRLRLEIDKKGRLSVRINNRHKIPLVFLLIALGLDINDIPDWLQSRTKKLEDLLSGLKNEGERTLELIALYKQLPGPKKVKPKANPLIISEQIQQWCAQVYKLGTSGRLNLNRRLNLNFSKSNDSLLPQDLIAAAELLVKMSLLHPGPKGGKDSSDDIDHLKNKHVISVAEMLRKQLSLCLIDLQIQVRRAIRRGISSKRILSPRSMMISRPLTQMFNQFFGSHELIQFLDQTNPLAEMAHKRKLSLLGPGGLTRRTASFRTRDIHPSHYGRICTIETSEGMNAGVIPSLSICARVDSEGVIENPLHKIGGNIKEQYTVYVRAGRDERLKIGTNNCLAIGQKGQERSTSTQYQQEFVSMSWDQINLRSILPIQYFAIGASLIPFLEHNDATRTLMGSSMQRQAVPLVKPEKSIVGTGIEAHISLDSGTVLISLKDGKIKYVDGKQIVLVDKDNVQQKFNLITYERSNNGTCIHQRPTVKIGFSVRKGQLLADGSATVGGELALGKNVLVAYMPWEGYNFEDAVLISDRLVNEDIYTSIHIQRYEISVQENIEGFDIITREIPHVDKYLLRHLDYRGIIKIGAWVEPGDVLVGKLAPLEAPHLLRSPEGKLLQAIFGVQAITTRESCLKLPAGGTGRVIDVRWIEQQGPSGVSSLHVYILQKRKIQVGDKVAGRHGNKGVVSRILPREDMPYMQDGTPIDMVLSPLGVPSRMNVGQLFECLLGLAGSYLNNHYRIMPFDERFEREASRKLVFSELYKARKFTGYPWLFEPNSPGKSSLFDGRTGEIFEQSITVGKAYMMKLIHMVDEKIHARSSGPYALVTQQPLRGRSNKGGQRVGEMEVWAFEGFGAAYMLQEILTIKSDHVKGRSQVRGAIVAKESIPKPIDPPDCFRLLIRELRCLGIEIKHTIISEKNFFLDQKPI.

Belongs to the RNA polymerase beta chain family. In terms of assembly, in plastids the minimal PEP RNA polymerase catalytic core is composed of four subunits: alpha, beta, beta', and beta''. When a (nuclear-encoded) sigma factor is associated with the core the holoenzyme is formed, which can initiate transcription.

It is found in the plastid. The protein localises to the chloroplast. It carries out the reaction RNA(n) + a ribonucleoside 5'-triphosphate = RNA(n+1) + diphosphate. Its function is as follows. DNA-dependent RNA polymerase catalyzes the transcription of DNA into RNA using the four ribonucleoside triphosphates as substrates. This is DNA-directed RNA polymerase subunit beta from Staurastrum punctulatum (Green alga).